A 92-amino-acid polypeptide reads, in one-letter code: RNA-binding protein Hfq (92 aa).

Positions 9 to 68 (DPFLNALRRERVPVSIYLVNGIKLQGQVESFDQFVILLKNTVSQMVYKHAISTVVPSRPF) constitute a Sm domain. A compositionally biased stretch (polar residues) spans 73–82 (HQATNAQAGY). Positions 73–92 (HQATNAQAGYNAQHDDGDEK) are disordered.

Belongs to the Hfq family. As to quaternary structure, homohexamer.

RNA chaperone that binds small regulatory RNA (sRNAs) and mRNAs to facilitate mRNA translational regulation in response to envelope stress, environmental stress and changes in metabolite concentrations. Also binds with high specificity to tRNAs. This chain is RNA-binding protein Hfq, found in Shewanella pealeana (strain ATCC 700345 / ANG-SQ1).